Consider the following 513-residue polypeptide: Na(+)/H(+) antiporter NhaB (513 aa).

12 helical membrane-spanning segments follow: residues 23–43, 52–72, 97–117, 120–140, 144–164, 202–222, 238–258, 303–323, 348–368, 391–411, 447–467, and 475–495; these read LALI…PFVA, IFTL…LLAI, LLLM…LFIF, LLLS…AAAF, FLDA…FYGI, LMMH…VGEP, FFLR…LTCL, AIIG…VGLI, TESL…AVII, LFYI…VGTI, ATPN…APLI, and VWMA…CVEF.

Belongs to the NhaB Na(+)/H(+) (TC 2.A.34) antiporter family.

It localises to the cell inner membrane. The catalysed reaction is 2 Na(+)(in) + 3 H(+)(out) = 2 Na(+)(out) + 3 H(+)(in). In terms of biological role, na(+)/H(+) antiporter that extrudes sodium in exchange for external protons. This Escherichia coli O45:K1 (strain S88 / ExPEC) protein is Na(+)/H(+) antiporter NhaB.